Here is a 356-residue protein sequence, read N- to C-terminus: UDP-N-acetylglucosamine--N-acetylmuramyl-(pentapeptide) pyrophosphoryl-undecaprenol N-acetylglucosamine transferase (356 aa).

UDP-N-acetyl-alpha-D-glucosamine is bound by residues 14–16 (TGG), Asn-126, Arg-162, Ser-190, Ile-244, and Gln-289.

It belongs to the glycosyltransferase 28 family. MurG subfamily.

It localises to the cell inner membrane. The catalysed reaction is di-trans,octa-cis-undecaprenyl diphospho-N-acetyl-alpha-D-muramoyl-L-alanyl-D-glutamyl-meso-2,6-diaminopimeloyl-D-alanyl-D-alanine + UDP-N-acetyl-alpha-D-glucosamine = di-trans,octa-cis-undecaprenyl diphospho-[N-acetyl-alpha-D-glucosaminyl-(1-&gt;4)]-N-acetyl-alpha-D-muramoyl-L-alanyl-D-glutamyl-meso-2,6-diaminopimeloyl-D-alanyl-D-alanine + UDP + H(+). It participates in cell wall biogenesis; peptidoglycan biosynthesis. Functionally, cell wall formation. Catalyzes the transfer of a GlcNAc subunit on undecaprenyl-pyrophosphoryl-MurNAc-pentapeptide (lipid intermediate I) to form undecaprenyl-pyrophosphoryl-MurNAc-(pentapeptide)GlcNAc (lipid intermediate II). This Cupriavidus necator (strain ATCC 17699 / DSM 428 / KCTC 22496 / NCIMB 10442 / H16 / Stanier 337) (Ralstonia eutropha) protein is UDP-N-acetylglucosamine--N-acetylmuramyl-(pentapeptide) pyrophosphoryl-undecaprenol N-acetylglucosamine transferase.